Reading from the N-terminus, the 537-residue chain is Putative cysteine ligase BshC (537 aa).

Positions 417–457 (ASEQFLNELDQLEAQQKETYERLAAEVQGNEDNKNLVEKNN) form a coiled coil.

The protein belongs to the BshC family.

Involved in bacillithiol (BSH) biosynthesis. May catalyze the last step of the pathway, the addition of cysteine to glucosamine malate (GlcN-Mal) to generate BSH. The protein is Putative cysteine ligase BshC of Staphylococcus carnosus (strain TM300).